Consider the following 381-residue polypeptide: O-antigen chain mannosyltransferase B (381 aa).

The protein belongs to the glycosyltransferase group 1 family. Glycosyltransferase 4 subfamily.

The catalysed reaction is alpha-D-mannosyl-(1-&gt;3)-N-acetyl-alpha-D-glucosaminyl-di-trans,octa-cis-undecaprenyl diphosphate + 2 GDP-alpha-D-mannose = alpha-D-mannosyl-(1-&gt;3)-alpha-D-mannosyl-(1-&gt;3)-alpha-D-mannosyl-(1-&gt;3)-N-acetyl-alpha-D-glucosaminyl-di-trans,octa-cis-undecaprenyl diphosphate + 2 GDP + 2 H(+). It participates in bacterial outer membrane biogenesis; LPS O-antigen biosynthesis. Mannosyltransferase involved in the biosynthesis of the repeat unit of the lipopolysaccharide (LPS) O-antigen region. Catalyzes the transfer of two alpha-(1-&gt;3)-linked mannose residues to the product of the WbdC enzyme during the synthesis of the adapter region. In Escherichia coli, this protein is O-antigen chain mannosyltransferase B.